The chain runs to 198 residues: Holliday junction branch migration complex subunit RuvA (198 aa).

Residues 1–63 are domain I; the sequence is MIAYLSGAVR…EDAQLLFGFL (63 aa). A domain II region spans residues 64-142; that stretch reads DTDSLRLFDL…EHLAAGAPVS (79 aa). The segment at 143–150 is flexible linker; that stretch reads AGKAALTS. Residues 150–198 form a domain III region; it reads STAGRDAIEALLALGFREPQVRSVVAELLAADPEQSADALIRKGLGKLR.

It belongs to the RuvA family. In terms of assembly, homotetramer. Forms an RuvA(8)-RuvB(12)-Holliday junction (HJ) complex. HJ DNA is sandwiched between 2 RuvA tetramers; dsDNA enters through RuvA and exits via RuvB. An RuvB hexamer assembles on each DNA strand where it exits the tetramer. Each RuvB hexamer is contacted by two RuvA subunits (via domain III) on 2 adjacent RuvB subunits; this complex drives branch migration. In the full resolvosome a probable DNA-RuvA(4)-RuvB(12)-RuvC(2) complex forms which resolves the HJ.

Its subcellular location is the cytoplasm. Its function is as follows. The RuvA-RuvB-RuvC complex processes Holliday junction (HJ) DNA during genetic recombination and DNA repair, while the RuvA-RuvB complex plays an important role in the rescue of blocked DNA replication forks via replication fork reversal (RFR). RuvA specifically binds to HJ cruciform DNA, conferring on it an open structure. The RuvB hexamer acts as an ATP-dependent pump, pulling dsDNA into and through the RuvAB complex. HJ branch migration allows RuvC to scan DNA until it finds its consensus sequence, where it cleaves and resolves the cruciform DNA. The chain is Holliday junction branch migration complex subunit RuvA from Deinococcus geothermalis (strain DSM 11300 / CIP 105573 / AG-3a).